A 692-amino-acid polypeptide reads, in one-letter code: Elongation factor G (692 aa).

Residues 8-282 (EKTRNIGIMA…AVLDYLPAPT (275 aa)) form the tr-type G domain. GTP-binding positions include 17-24 (AHIDAGKT), 81-85 (DTPGH), and 135-138 (NKMD).

Belongs to the TRAFAC class translation factor GTPase superfamily. Classic translation factor GTPase family. EF-G/EF-2 subfamily.

It is found in the cytoplasm. Its function is as follows. Catalyzes the GTP-dependent ribosomal translocation step during translation elongation. During this step, the ribosome changes from the pre-translocational (PRE) to the post-translocational (POST) state as the newly formed A-site-bound peptidyl-tRNA and P-site-bound deacylated tRNA move to the P and E sites, respectively. Catalyzes the coordinated movement of the two tRNA molecules, the mRNA and conformational changes in the ribosome. This chain is Elongation factor G, found in Bacillus velezensis (strain DSM 23117 / BGSC 10A6 / LMG 26770 / FZB42) (Bacillus amyloliquefaciens subsp. plantarum).